Here is a 140-residue protein sequence, read N- to C-terminus: uncharacterized protein (140 aa).

This is an uncharacterized protein from Mycoplasma genitalium (strain ATCC 33530 / DSM 19775 / NCTC 10195 / G37) (Mycoplasmoides genitalium).